We begin with the raw amino-acid sequence, 444 residues long: Aspartate--tRNA(Asp/Asn) ligase (444 aa).

Glu176 provides a ligand contact to L-aspartate. The segment at 198–201 is aspartate; sequence QLFK. Arg220 serves as a coordination point for L-aspartate. Residues 220 to 222, 228 to 230, and Glu367 each bind ATP; these read RAE and RHL. Mg(2+) is bound by residues Glu367 and Ser370. L-aspartate is bound by residues Ser370 and Arg374. ATP is bound at residue 415–418; sequence GCER.

Belongs to the class-II aminoacyl-tRNA synthetase family. Type 2 subfamily. Homodimer. Mg(2+) serves as cofactor.

It localises to the cytoplasm. It carries out the reaction tRNA(Asx) + L-aspartate + ATP = L-aspartyl-tRNA(Asx) + AMP + diphosphate. Functionally, aspartyl-tRNA synthetase with relaxed tRNA specificity since it is able to aspartylate not only its cognate tRNA(Asp) but also tRNA(Asn). Reaction proceeds in two steps: L-aspartate is first activated by ATP to form Asp-AMP and then transferred to the acceptor end of tRNA(Asp/Asn). This is Aspartate--tRNA(Asp/Asn) ligase from Methanosarcina barkeri (strain Fusaro / DSM 804).